The following is a 429-amino-acid chain: 3-phosphoshikimate 1-carboxyvinyltransferase (429 aa).

Lysine 23, serine 24, and arginine 28 together coordinate 3-phosphoshikimate. Phosphoenolpyruvate is bound at residue lysine 23. Residues glycine 95 and arginine 123 each contribute to the phosphoenolpyruvate site. The 3-phosphoshikimate site is built by serine 168, glutamine 170, aspartate 316, and lysine 343. Glutamine 170 is a phosphoenolpyruvate binding site. Aspartate 316 acts as the Proton acceptor in catalysis. Phosphoenolpyruvate contacts are provided by arginine 347 and arginine 389.

Belongs to the EPSP synthase family. As to quaternary structure, monomer.

The protein resides in the cytoplasm. It catalyses the reaction 3-phosphoshikimate + phosphoenolpyruvate = 5-O-(1-carboxyvinyl)-3-phosphoshikimate + phosphate. It participates in metabolic intermediate biosynthesis; chorismate biosynthesis; chorismate from D-erythrose 4-phosphate and phosphoenolpyruvate: step 6/7. Functionally, catalyzes the transfer of the enolpyruvyl moiety of phosphoenolpyruvate (PEP) to the 5-hydroxyl of shikimate-3-phosphate (S3P) to produce enolpyruvyl shikimate-3-phosphate and inorganic phosphate. In Bacillus thuringiensis subsp. konkukian (strain 97-27), this protein is 3-phosphoshikimate 1-carboxyvinyltransferase.